Here is a 509-residue protein sequence, read N- to C-terminus: Maturase K (509 aa).

Belongs to the intron maturase 2 family. MatK subfamily.

It is found in the plastid. The protein localises to the chloroplast. Functionally, usually encoded in the trnK tRNA gene intron. Probably assists in splicing its own and other chloroplast group II introns. This is Maturase K from Avicennia marina (Grey mangrove).